A 394-amino-acid chain; its full sequence is Aromatic aminotransferase ISS1 (394 aa).

Gly-2 bears the N-acetylglycine mark. Gly-38 serves as a coordination point for substrate. Pyridoxal 5'-phosphate contacts are provided by residues Tyr-64, 98-99 (AN), Tyr-123, Asn-176, Tyr-207, and 230-232 (SFS). Substrate contacts are provided by Tyr-123 and Asn-176. Lys-233 is subject to N6-(pyridoxal phosphate)lysine. Arg-241 serves as a coordination point for pyridoxal 5'-phosphate. Residues Arg-362 and Arg-374 each coordinate substrate.

The protein belongs to the class-I pyridoxal-phosphate-dependent aminotransferase family. In terms of assembly, homodimer. Requires pyridoxal 5'-phosphate as cofactor. As to expression, expressed in roots, cotyledons and flowers.

The protein resides in the cytoplasm. The enzyme catalyses a 2-oxocarboxylate + L-methionine = 4-methylsulfanyl-2-oxobutanoate + an L-alpha-amino acid. The catalysed reaction is L-tryptophan + 2-oxoglutarate = indole-3-pyruvate + L-glutamate. It catalyses the reaction L-tyrosine + 2-oxoglutarate = 3-(4-hydroxyphenyl)pyruvate + L-glutamate. Functionally, coordinates and prevents auxin (IAA) and ethylene biosynthesis, thus regulating auxin homeostasis in young seedlings. Shows aminotransferase activity with methionine; can use the ethylene biosynthetic intermediate L-methionine (L-Met) as an amino donor and the auxin biosynthetic intermediate, indole-3-pyruvic acid (3-IPA) as an amino acceptor to produce L-tryptophan (L-Trp) and 2-oxo-4-methylthiobutyric acid (KMBA). Can also use tryptophan (Trp), phenylalanine (Phe), and tyrosine (Tyr) as substrates. Regulates tryptophan (Trp) homeostasis and catabolism in mature plants. Also possibly involved in the metabolism of other aromatic amino acids and phenylpropanoid homeostasis. This Arabidopsis thaliana (Mouse-ear cress) protein is Aromatic aminotransferase ISS1.